Consider the following 174-residue polypeptide: D(1B) dopamine receptor (174 aa).

The chain crosses the membrane as a helical span at residues 1–10 (SILNLCIISV). The Cytoplasmic portion of the chain corresponds to 11–32 (DRYWAISRPFCYERKMTQRVAL). A helical membrane pass occupies residues 33 to 54 (VMVGLAWTLSILISFIPVQLHW). Residues 55 to 96 (HRDKVGSRDGLDPPSNLANGTPWEEAGESDRSAENCDSSLNR) are Extracellular-facing. The interval 64–88 (GLDPPSNLANGTPWEEAGESDRSAE) is disordered. N-linked (GlcNAc...) asparagine glycosylation is present at Asn-95. A helical transmembrane segment spans residues 97-119 (TYAISSSLISFYIPVAIMIVTYT). Topologically, residues 120–169 (RIYRIAQVQIRRISSLERAAEHAQSCRSREACAPDSGLRASIKKETKVLK) are cytoplasmic. Residues 170 to 174 (TLSVI) form a helical membrane-spanning segment.

The protein belongs to the G-protein coupled receptor 1 family.

It localises to the cell membrane. Its function is as follows. Dopamine receptor whose activity is mediated by G proteins which activate adenylyl cyclase. The protein is D(1B) dopamine receptor (DRD5) of Bos taurus (Bovine).